The chain runs to 601 residues: Threonine dehydratase (601 aa).

Residues M1–R51 constitute a chloroplast transit peptide. 2 consecutive ACT-like domains span residues A427–N499 and I521–L592.

Belongs to the serine/threonine dehydratase family. Pyridoxal 5'-phosphate serves as cofactor.

Its subcellular location is the plastid. It localises to the chloroplast. The catalysed reaction is L-threonine = 2-oxobutanoate + NH4(+). The protein operates within amino-acid biosynthesis; L-isoleucine biosynthesis; 2-oxobutanoate from L-threonine: step 1/1. In terms of biological role, catalyzes the conversion of threonine to alpha-keto butyrate in isoleucine (Ile) biosynthesis. Required for JA-Ile biosynthesis, a signaling molecule involved in defense and resistance to the herbivore Manduca sexta caterpillars. The chain is Threonine dehydratase from Nicotiana attenuata (Coyote tobacco).